We begin with the raw amino-acid sequence, 142 residues long: Large ribosomal subunit protein uL16 (142 aa).

It belongs to the universal ribosomal protein uL16 family. In terms of assembly, part of the 50S ribosomal subunit.

Functionally, binds 23S rRNA and is also seen to make contacts with the A and possibly P site tRNAs. This is Large ribosomal subunit protein uL16 from Mycoplasmopsis pulmonis (strain UAB CTIP) (Mycoplasma pulmonis).